A 518-amino-acid chain; its full sequence is Prosaposin (518 aa).

The signal sequence occupies residues 1-17 (MARRLLTLLGLLAAAVA). A propeptide spanning residues 18–60 (SPVLWQKDCAKGPEVWCQSLRTASQCGAVKHCQQNVWSKPAVN) is cleaved from the precursor. In terms of domain architecture, Saposin A-type 1 spans 19-59 (PVLWQKDCAKGPEVWCQSLRTASQCGAVKHCQQNVWSKPAV). Saposin B-type domains lie at 60-143 (NSIP…QSLQ), 193-277 (TEDV…PSVK), 307-388 (TFSV…AANK), and 399-480 (AGGF…GAAK). 3 cysteine pairs are disulfide-bonded: C64–C139, C67–C133, and C95–C107. N81 is a glycosylation site (N-linked (GlcNAc...) asparagine). A propeptide spanning residues 144–193 (KHLAAMKLQKQLQSNKIPELDFSELTSPFMANVPLLLYPQDKPKQKSKAT) is cleaved from the precursor. Disulfide bonds link C197–C273, C200–C267, and C229–C240. The N-linked (GlcNAc...) asparagine glycan is linked to N214. The propeptide occupies 277–306 (KSVPLQTLVPAQVVHEVKMETVEKATVQEK). Cystine bridges form between C311/C384, C314/C378, and C342/C353. N328 is a glycosylation site (N-linked (GlcNAc...) asparagine). Residues 388-398 (KPPQQPVVVKP) constitute a propeptide that is removed on maturation. Cystine bridges form between C403–C476, C406–C470, and C434–C445. N420 carries an N-linked (GlcNAc...) asparagine glycan. A propeptide spanning residues 480–518 (KKPLLGEDACVWGPGYWCKNMETAAQCNAVDHCRRHVWN) is cleaved from the precursor. Positions 482 to 518 (PLLGEDACVWGPGYWCKNMETAAQCNAVDHCRRHVWN) constitute a Saposin A-type 2 domain.

In terms of assembly, saposin-B is a homodimer. In terms of processing, this precursor is proteolytically processed to 4 small peptides, which are similar to each other and are sphingolipid hydrolase activator proteins.

It is found in the lysosome. The protein resides in the secreted. Functionally, the lysosomal degradation of sphingolipids takes place by the sequential action of specific hydrolases. Some of these enzymes require specific low-molecular mass, non-enzymatic proteins: the sphingolipids activator proteins (coproteins). Its function is as follows. Saposin-A and saposin-C stimulate the hydrolysis of glucosylceramide by beta-glucosylceramidase (EC 3.2.1.45) and galactosylceramide by beta-galactosylceramidase (EC 3.2.1.46). Saposin-C apparently acts by combining with the enzyme and acidic lipid to form an activated complex, rather than by solubilizing the substrate. Saposin-B stimulates the hydrolysis of galacto-cerebroside sulfate by arylsulfatase A (EC 3.1.6.8), GM1 gangliosides by beta-galactosidase (EC 3.2.1.23) and globotriaosylceramide by alpha-galactosidase A (EC 3.2.1.22). Saposin-B forms a solubilizing complex with the substrates of the sphingolipid hydrolases. In terms of biological role, saposin-D is a specific sphingomyelin phosphodiesterase activator (EC 3.1.4.12). This chain is Prosaposin (PSAP), found in Gallus gallus (Chicken).